The primary structure comprises 672 residues: tRNA 5-methylaminomethyl-2-thiouridine biosynthesis bifunctional protein MnmC (672 aa).

Residues 1-243 (MTSIKNAELG…KREMIAGSME (243 aa)) are tRNA (mnm(5)s(2)U34)-methyltransferase. The tract at residues 269–672 (IGGGIASAAL…LRKGKAITEL (404 aa)) is FAD-dependent cmnm(5)s(2)U34 oxidoreductase.

It in the N-terminal section; belongs to the methyltransferase superfamily. tRNA (mnm(5)s(2)U34)-methyltransferase family. In the C-terminal section; belongs to the DAO family. Requires FAD as cofactor.

The protein localises to the cytoplasm. The enzyme catalyses 5-aminomethyl-2-thiouridine(34) in tRNA + S-adenosyl-L-methionine = 5-methylaminomethyl-2-thiouridine(34) in tRNA + S-adenosyl-L-homocysteine + H(+). Catalyzes the last two steps in the biosynthesis of 5-methylaminomethyl-2-thiouridine (mnm(5)s(2)U) at the wobble position (U34) in tRNA. Catalyzes the FAD-dependent demodification of cmnm(5)s(2)U34 to nm(5)s(2)U34, followed by the transfer of a methyl group from S-adenosyl-L-methionine to nm(5)s(2)U34, to form mnm(5)s(2)U34. In Vibrio campbellii (strain ATCC BAA-1116), this protein is tRNA 5-methylaminomethyl-2-thiouridine biosynthesis bifunctional protein MnmC.